The sequence spans 504 residues: Pentatricopeptide repeat-containing protein At1g09220, mitochondrial (504 aa).

The N-terminal 87 residues, 1 to 87, are a transit peptide targeting the mitochondrion; sequence MFLFSSRRIT…FLFNPLLRCY (87 aa). 10 PPR repeats span residues 76-110, 120-156, 157-187, 188-222, 223-253, 255-289, 291-321, 324-358, 359-390, and 396-430; these read KLFL…HFLS, DSFT…GFES, HVYV…MPER, NPVT…TVVS, WTTI…DAIK, NEIT…GFVP, DIRV…IPNG, NLVS…GLKP, NRVT…MVNE, and DVKH…EKAV. The type E motif; degenerate stretch occupies residues 431–504; that stretch reads VWRMLLGACS…AKLPGHSQVT (74 aa).

It belongs to the PPR family. PCMP-E subfamily.

It localises to the mitochondrion. This Arabidopsis thaliana (Mouse-ear cress) protein is Pentatricopeptide repeat-containing protein At1g09220, mitochondrial (PCMP-E25).